We begin with the raw amino-acid sequence, 73 residues long: Venom protein 55.1 (73 aa).

The signal sequence occupies residues 1-19; it reads MNFLCILFVVSLISSLSKC. Pro-57 carries the proline amide modification. The propeptide occupies 61-73; it reads RRSFDLYALVNAK.

The protein belongs to the diuretic hormone class 2 family. As to expression, expressed by the venom gland.

It is found in the secreted. In terms of biological role, regulates fluid secretion. The protein is Venom protein 55.1 of Lychas mucronatus (Chinese swimming scorpion).